The following is a 409-amino-acid chain: Pectin acetylesterase 4 (409 aa).

A signal peptide spans 1–32; it reads MVIRSLLQCRTWSKSDWLLASIGIVLIVYSFS. N-linked (GlcNAc...) asparagine glycans are attached at residues Asn-36 and Asn-163. Active-site charge relay system residues include Ser-199, Asp-295, and His-362. 2 N-linked (GlcNAc...) asparagine glycosylation sites follow: Asn-379 and Asn-406.

Belongs to the pectinacetylesterase family.

Its subcellular location is the secreted. The protein resides in the cell wall. Hydrolyzes acetyl esters in homogalacturonan regions of pectin. In type I primary cell wall, galacturonic acid residues of pectin can be acetylated at the O-2 and O-3 positions. Decreasing the degree of acetylation of pectin gels in vitro alters their physical properties. This Arabidopsis thaliana (Mouse-ear cress) protein is Pectin acetylesterase 4.